Consider the following 396-residue polypeptide: Probable isocitrate dehydrogenase [NAD] gamma 2, mitochondrial (396 aa).

A mitochondrion-targeting transit peptide spans 1–25 (MLAVTSCSMKTVLQYAVFLGHSREV). Thr-117 contacts citrate. Substrate-binding residues include Arg-133, Arg-164, and Asp-251. Asp-251 contributes to the Mn(2+) binding site. Asn-321 contacts ADP.

It belongs to the isocitrate and isopropylmalate dehydrogenases family. As to quaternary structure, heterooligomer of subunits alpha (IDH3A), beta (IDH3B), and gamma (IDH3G) in the apparent ratio of 2:1:1. The heterodimer containing one IDH3A and one IDH3B subunit and the heterodimer containing one IDH3A and one IDH3G subunit assemble into a heterotetramer (which contains two subunits of IDH3A, one of IDH3B and one of IDH3G) and further into the heterooctamer. The cofactor is Mg(2+). Mn(2+) is required as a cofactor.

The protein localises to the mitochondrion. Its activity is regulated as follows. The heterotetramer and the heterodimer composed of IDH3A and IDH3G subunits can be allosterically activated by citrate (CIT) or/and ADP, and the two activators can act independently or synergistically. The heterodimer composed of IDH3A and IDH3B subunits cannot be allosterically regulated and the allosteric regulation of the heterotetramer is through the IDH3G subunit and not the IDH3B subunit. The IDH3G subunit contains the allosteric site which consists of a CIT-binding site and an ADP-binding site, and the binding of CIT and ADP causes conformational changes at the allosteric site which are transmitted to the active site in the catalytic subunit (IDH3A) through a cascade of conformational changes at the heterodimer interface, leading to stabilization of the isocitrate-binding at the active site and thus activation of the enzyme. ATP can activate the heterotetramer and the heterodimer composed of IDH3A and IDH3G subunits at low concentrations but inhibits their activities at high concentrations, whereas ATP exhibits only inhibitory effect on the heterodimer composed of IDH3A and IDH3B subunits. Functionally, regulatory subunit which plays a role in the allosteric regulation of the enzyme catalyzing the decarboxylation of isocitrate (ICT) into alpha-ketoglutarate. The heterodimer composed of the alpha (IDH3A) and beta (IDH3B) subunits and the heterodimer composed of the alpha (IDH3A) and gamma (IDH3G) subunits, have considerable basal activity but the full activity of the heterotetramer (containing two subunits of IDH3A, one of IDH3B and one of IDH3G) requires the assembly and cooperative function of both heterodimers. The sequence is that of Probable isocitrate dehydrogenase [NAD] gamma 2, mitochondrial from Mus musculus (Mouse).